We begin with the raw amino-acid sequence, 101 residues long: Small ribosomal subunit protein uS14 (101 aa).

This sequence belongs to the universal ribosomal protein uS14 family. In terms of assembly, part of the 30S ribosomal subunit. Contacts proteins S3 and S10.

Functionally, binds 16S rRNA, required for the assembly of 30S particles and may also be responsible for determining the conformation of the 16S rRNA at the A site. The chain is Small ribosomal subunit protein uS14 from Arthrobacter sp. (strain FB24).